The primary structure comprises 444 residues: Transcriptional regulatory protein GlrR (444 aa).

Residues 7–121 (HLLLVDDDPG…ALYQAIDDAL (115 aa)) form the Response regulatory domain. At D56 the chain carries 4-aspartylphosphate. Positions 136 to 366 (IVTRSPLMLR…VNVIEQCVAL (231 aa)) constitute a Sigma-54 factor interaction domain. ATP contacts are provided by residues 164 to 171 (GQSGTGKE) and 227 to 236 (AEGGTLFLDE). The H-T-H motif DNA-binding region spans 414–433 (VTHAARMAGRNRTEFYKLLS).

In terms of processing, phosphorylated by GlrK.

Its subcellular location is the cytoplasm. Member of the two-component regulatory system GlrR/GlrK that up-regulates transcription of the glmY sRNA when cells enter the stationary growth phase. Regulates glmY transcription by binding to three conserved sites in the purL-glmY intergenic region. The polypeptide is Transcriptional regulatory protein GlrR (glrR) (Escherichia coli (strain K12)).